Reading from the N-terminus, the 386-residue chain is Diels-Alderase phm7 (386 aa).

A beta-sandwich motif region spans residues Met-1–Trp-223. Residues Glu-51, Asn-84, and Lys-356 each contribute to the substrate site. Residues Trp-223–Pro-386 form a beta-barrel motif region.

The protein belongs to the Diels-Alderase family.

It participates in secondary metabolite biosynthesis. With respect to regulation, 3-aminomethyl-p-menthane which is similar to the phomasetin substructure, dose-dependently inhibits phm7 activity in vitro and production of phomasetin in the fungus. Functionally, diels-Alderase; part of the gene cluster that mediates the biosynthesis of the trans-fused decalin-containing tetramic acid phomasetin, the stereochemical opposite of the HIV-1 integrase inhibitor equisetin. The PKS module of phm1 together with the enoylreductase phm4 catalyze the formation of the polyketide unit which is then conjugated to L-serine by the condensation domain of the phm1 NRPS module. Activity of the Dieckmann cyclase domain (RED) of phm1 results in release of the Dieckmann product intermediate. The Diels-Alderase phm7 then uses the Dieckmann product of phm1 as substrate and catalyzes the Diels-Alder cycloaddition to form the decalin ring of N-desmethylphomasetin. N-desmethylphomasetin is further methylated to phomasetin by the methyltransferase phm5. In Pyrenochaetopsis sp, this protein is Diels-Alderase phm7.